A 281-amino-acid polypeptide reads, in one-letter code: MTNSSSRSVRAGSVVRTVCRHRGGRSAMVQDMVAAEMPVAFIYNGVQFAVMMATPEDLEDFALGFSLSEGIVDHAQDLRVIAVETFLEGASLQIDIPPERAAALDQRRRNLDGRSGCGVCGNESIEAVLRVPPVLNSSLQIDVDALAHALDALHARQPIAAQTGAVHAAGWADAQGNVQLVREDVGRHNALDKLIGALARARIDASQGFAVVTSRASYEMAMKATQARIPLLAAISAPTALAISLADSAGLTLIGFARNHDCVVYSHPQRLNLGVAVGETA.

Cys117 acts as the Cysteine persulfide intermediate in catalysis.

The protein belongs to the FdhD family.

The protein localises to the cytoplasm. Required for formate dehydrogenase (FDH) activity. Acts as a sulfur carrier protein that transfers sulfur from IscS to the molybdenum cofactor prior to its insertion into FDH. This chain is Sulfur carrier protein FdhD, found in Xanthomonas oryzae pv. oryzae (strain MAFF 311018).